Here is a 523-residue protein sequence, read N- to C-terminus: Nondiscriminating glutamyl-tRNA synthetase EARS2, mitochondrial (523 aa).

The N-terminal 41 residues, 1–41 (MAALLRRLLQRERPSAASGRPVGRREANLGTDAGVAVRVRF), are a transit peptide targeting the mitochondrion. An L-glutamate-binding site is contributed by 40 to 42 (RFA). Positions 45 to 53 (PTGFLHLGG) match the 'HIGH' region motif. His50 contributes to the ATP binding site. L-glutamate contacts are provided by residues Glu76, 228-232 (YHLAC), and Arg246. Glu249 provides a ligand contact to ATP. An N6-succinyllysine modification is found at Lys256. 284-288 (KLSKR) is a binding site for ATP. Residues 284 to 288 (KLSKR) carry the 'KMSKS' region motif. N6-acetyllysine is present on Lys486.

The protein belongs to the class-I aminoacyl-tRNA synthetase family. Glutamate--tRNA ligase type 1 subfamily.

The protein resides in the mitochondrion matrix. The catalysed reaction is tRNA(Glx) + L-glutamate + ATP = L-glutamyl-tRNA(Glx) + AMP + diphosphate. It carries out the reaction tRNA(Glu) + L-glutamate + ATP = L-glutamyl-tRNA(Glu) + AMP + diphosphate. The enzyme catalyses tRNA(Gln) + L-glutamate + ATP = L-glutamyl-tRNA(Gln) + AMP + diphosphate. In terms of biological role, non-discriminating glutamyl-tRNA synthetase that catalyzes aminoacylation of both mitochondrial tRNA(Glu) and tRNA(Gln) and participates in RNA aminoacylation for mitochondrial protein translation. Attachs glutamate to tRNA(Glu) or tRNA(Gln) in a two-step reaction: glutamate is first activated by ATP to form Glu-AMP and then transferred to the acceptor end of tRNA(Glu) or tRNA(Gln). In vitro, cytoplasmic tRNA(Gln) is slightly glutamylated, but with low activity. The polypeptide is Nondiscriminating glutamyl-tRNA synthetase EARS2, mitochondrial (Homo sapiens (Human)).